A 204-amino-acid chain; its full sequence is Ribonuclease HII (204 aa).

An RNase H type-2 domain is found at 1 to 197 (MILGIDEAGR…KNRILNPKLL (197 aa)). A divalent metal cation-binding residues include Asp6, Glu7, and Asp103.

This sequence belongs to the RNase HII family. Mn(2+) serves as cofactor. The cofactor is Mg(2+).

It is found in the cytoplasm. The enzyme catalyses Endonucleolytic cleavage to 5'-phosphomonoester.. Functionally, endonuclease that specifically degrades the RNA of RNA-DNA hybrids. The polypeptide is Ribonuclease HII (Helicobacter pylori (strain G27)).